Consider the following 239-residue polypeptide: Carboxy-S-adenosyl-L-methionine synthase (239 aa).

S-adenosyl-L-methionine contacts are provided by residues tyrosine 35, 64–66, 88–89, and arginine 195; these read GCS and DN.

Belongs to the class I-like SAM-binding methyltransferase superfamily. Cx-SAM synthase family. In terms of assembly, homodimer.

It catalyses the reaction prephenate + S-adenosyl-L-methionine = carboxy-S-adenosyl-L-methionine + 3-phenylpyruvate + H2O. In terms of biological role, catalyzes the conversion of S-adenosyl-L-methionine (SAM) to carboxy-S-adenosyl-L-methionine (Cx-SAM). This is Carboxy-S-adenosyl-L-methionine synthase from Helicobacter pylori (strain HPAG1).